The chain runs to 210 residues: Protein-methionine-sulfoxide reductase heme-binding subunit MsrQ (210 aa).

Helical transmembrane passes span leucine 8–phenylalanine 28, valine 37–threonine 57, leucine 75–leucine 95, proline 110–asparagine 130, leucine 147–leucine 167, and glutamate 169–threonine 189.

This sequence belongs to the MsrQ family. In terms of assembly, heterodimer of a catalytic subunit (MsrP) and a heme-binding subunit (MsrQ). FMN is required as a cofactor. It depends on heme b as a cofactor.

The protein resides in the cell inner membrane. Part of the MsrPQ system that repairs oxidized periplasmic proteins containing methionine sulfoxide residues (Met-O), using respiratory chain electrons. Thus protects these proteins from oxidative-stress damage caused by reactive species of oxygen and chlorine generated by the host defense mechanisms. MsrPQ is essential for the maintenance of envelope integrity under bleach stress, rescuing a wide series of structurally unrelated periplasmic proteins from methionine oxidation. MsrQ provides electrons for reduction to the reductase catalytic subunit MsrP, using the quinone pool of the respiratory chain. The chain is Protein-methionine-sulfoxide reductase heme-binding subunit MsrQ from Pseudomonas savastanoi pv. phaseolicola (strain 1448A / Race 6) (Pseudomonas syringae pv. phaseolicola (strain 1448A / Race 6)).